The primary structure comprises 351 residues: Selenide, water dikinase (351 aa).

Cys20 is an active-site residue. ATP is bound by residues Lys23 and 51-53 (TKD). Mg(2+) is bound at residue Asp54. ATP is bound by residues Asp71, Asp94, and 142 to 144 (GHS). Residue Asp94 coordinates Mg(2+). Residue Asp230 coordinates Mg(2+).

It belongs to the selenophosphate synthase 1 family. Class I subfamily. Homodimer. Requires Mg(2+) as cofactor.

The catalysed reaction is hydrogenselenide + ATP + H2O = selenophosphate + AMP + phosphate + 2 H(+). In terms of biological role, synthesizes selenophosphate from selenide and ATP. In Pasteurella multocida (strain Pm70), this protein is Selenide, water dikinase.